A 499-amino-acid chain; its full sequence is MTDQEQGQEEHKLIAQRREKLTKLRERGVAFPNDFRRNVMSGELHAEYDAKPAEFFEQNAIRVSVAGRMMAKRIMGKASFTQILDMSGRIQLFIQRDSLPDGAYSDFKTWDVGDILGAEGTLFKTKTGELTVNVDSLRLLTKSLRPLPEKFHGLSDTETRYRQRYVDLIMNEPVRETFRTRTRVIQFIRQFLDQRGFLEVETPMMQAIPGGATARPFATHHHALDMQLFLRIAPELYLKRLVVGGFERVYEINRNFRNEGLSTRHNPEFTMVEFYEAYANYHDLMDLTEDLLRDLTLEVLGSTQVHYQGETYDFERPFTRMTVKESILQHNPDVSEAELADLERARAVAQRLGIPLKDSYGLGKVWIEIFEKTVEGNLKDPTFITAYPTEVSPLARRNDEDPFVTDRFEFFVGGREIANGFSELNDYEDQAERFRKQVQEKEAGDDEAMHFDADYLRALEHGMPPTAGEGIGIDRLVMLLTDSPSIRDVLLFPHMRPES.

Mg(2+) contacts are provided by E409 and E416.

Belongs to the class-II aminoacyl-tRNA synthetase family. Homodimer. Mg(2+) is required as a cofactor.

The protein resides in the cytoplasm. It carries out the reaction tRNA(Lys) + L-lysine + ATP = L-lysyl-tRNA(Lys) + AMP + diphosphate. This Thioalkalivibrio sulfidiphilus (strain HL-EbGR7) protein is Lysine--tRNA ligase.